We begin with the raw amino-acid sequence, 131 residues long: Small ribosomal subunit protein uS11 (131 aa).

Belongs to the universal ribosomal protein uS11 family. As to quaternary structure, part of the 30S ribosomal subunit. Interacts with proteins S7 and S18. Binds to IF-3.

Its function is as follows. Located on the platform of the 30S subunit, it bridges several disparate RNA helices of the 16S rRNA. Forms part of the Shine-Dalgarno cleft in the 70S ribosome. This chain is Small ribosomal subunit protein uS11, found in Deinococcus geothermalis (strain DSM 11300 / CIP 105573 / AG-3a).